The primary structure comprises 194 residues: Fe/S biogenesis protein NfuA (194 aa).

[4Fe-4S] cluster contacts are provided by cysteine 152 and cysteine 155.

The protein belongs to the NfuA family. Homodimer. The cofactor is [4Fe-4S] cluster.

In terms of biological role, involved in iron-sulfur cluster biogenesis. Binds a 4Fe-4S cluster, can transfer this cluster to apoproteins, and thereby intervenes in the maturation of Fe/S proteins. Could also act as a scaffold/chaperone for damaged Fe/S proteins. This chain is Fe/S biogenesis protein NfuA, found in Pseudomonas putida (strain GB-1).